The primary structure comprises 54 residues: Califin-B (54 aa).

Cysteine 25 and cysteine 53 are joined by a disulfide. A Leucine amide modification is found at leucine 36.

The protein belongs to the molluscan ELH family. As to quaternary structure, this protein consists of a large 36-residue subunit, bound by a single disulfide-bond to a small 18-residue subunit.

It is found in the secreted. In terms of biological role, injected in sexually mature animals califin B excites LB and LC cells of the abdominal ganglion and cause egg-laying. This is Califin-B from Aplysia californica (California sea hare).